We begin with the raw amino-acid sequence, 180 residues long: MKKVLLPLAALVLSATASNAMAANGTVKFTGEIKQSTCQVTSDTQNKEVYLGTYPTSAFPTVGSKSASKAFQISLEKCDAGDYSLRFDGNTVAGNPDLLSVSNVGGTGAAATGVGIEITDNNGKPFAIGDGSNINDDVAKVTIAADGKATFNLQARYRSFDSNVTAGLANATSPFTIEYK.

The signal sequence occupies residues 1 to 22; that stretch reads MKKVLLPLAALVLSATASNAMA. A disulfide bridge links cysteine 38 with cysteine 78.

This sequence belongs to the fimbrial protein family.

Its subcellular location is the fimbrium. Its function is as follows. Fimbriae (also called pili), polar filaments radiating from the surface of the bacterium to a length of 0.5-1.5 micrometers and numbering 100-300 per cell, enable bacteria to colonize the epithelium of specific host organs. This Serratia marcescens protein is Type-1 fimbrial protein subunit (fimA).